The chain runs to 146 residues: Hemoglobin subunit beta (146 aa).

The 145-residue stretch at 2 to 146 (HWSAEEKQLI…VAHALARKYH (145 aa)) folds into the Globin domain. Positions 63 and 92 each coordinate heme b.

It belongs to the globin family. As to quaternary structure, heterotetramer of two alpha chains and two beta chains. In terms of tissue distribution, red blood cells.

Functionally, involved in oxygen transport from the lung to the various peripheral tissues. In Phoenicopterus ruber (American flamingo), this protein is Hemoglobin subunit beta (HBB).